The following is a 455-amino-acid chain: Glutamate-1-semialdehyde 2,1-aminomutase (455 aa).

K286 is subject to N6-(pyridoxal phosphate)lysine.

This sequence belongs to the class-III pyridoxal-phosphate-dependent aminotransferase family. HemL subfamily. As to quaternary structure, homodimer. Pyridoxal 5'-phosphate serves as cofactor.

Its subcellular location is the cytoplasm. It catalyses the reaction (S)-4-amino-5-oxopentanoate = 5-aminolevulinate. Its pathway is porphyrin-containing compound metabolism; protoporphyrin-IX biosynthesis; 5-aminolevulinate from L-glutamyl-tRNA(Glu): step 2/2. The chain is Glutamate-1-semialdehyde 2,1-aminomutase from Clavibacter sepedonicus (Clavibacter michiganensis subsp. sepedonicus).